We begin with the raw amino-acid sequence, 599 residues long: Elongation factor 4 (599 aa).

The 183-residue stretch at 4 to 186 folds into the tr-type G domain; it reads ENIRNFSIIA…EIVKKIPPPE (183 aa). Residues 16–21 and 133–136 contribute to the GTP site; these read DHGKST and NKID.

This sequence belongs to the TRAFAC class translation factor GTPase superfamily. Classic translation factor GTPase family. LepA subfamily.

Its subcellular location is the cell inner membrane. It catalyses the reaction GTP + H2O = GDP + phosphate + H(+). Functionally, required for accurate and efficient protein synthesis under certain stress conditions. May act as a fidelity factor of the translation reaction, by catalyzing a one-codon backward translocation of tRNAs on improperly translocated ribosomes. Back-translocation proceeds from a post-translocation (POST) complex to a pre-translocation (PRE) complex, thus giving elongation factor G a second chance to translocate the tRNAs correctly. Binds to ribosomes in a GTP-dependent manner. This chain is Elongation factor 4, found in Geobacter metallireducens (strain ATCC 53774 / DSM 7210 / GS-15).